The chain runs to 185 residues: Elongation factor P (185 aa).

The protein belongs to the elongation factor P family.

Its subcellular location is the cytoplasm. It participates in protein biosynthesis; polypeptide chain elongation. Involved in peptide bond synthesis. Stimulates efficient translation and peptide-bond synthesis on native or reconstituted 70S ribosomes in vitro. Probably functions indirectly by altering the affinity of the ribosome for aminoacyl-tRNA, thus increasing their reactivity as acceptors for peptidyl transferase. The polypeptide is Elongation factor P (Caldanaerobacter subterraneus subsp. tengcongensis (strain DSM 15242 / JCM 11007 / NBRC 100824 / MB4) (Thermoanaerobacter tengcongensis)).